Reading from the N-terminus, the 381-residue chain is MSKRDYYEVLGIERGADQKEIKKAYRRLAQKYHPDRNPDDDTAAEKFREVSEAYEVLTDEEKRSAYDQFGHAGVDGQAGGGFGGGGFGGGAGGFSDIFGDVFGDIFGGGGRRNPNAPQRGSDLRYNLELDLEDAVAGTTVDIRVPRHIECEHCDGDGAEPGSTKETCPTCHGQGQVRMQQGFFAVQQTCPTCHGAGQTIKVPCRKCHGEGRVRETRTLSVKIPAGVDTGDRIRLNNEGEAGLNGGPPGDLYVQAAIKPHPIFERDGRHLQCEVPINFIDATLGGELEVPTLDGRVKLKIPPETQTGKMFRLKGKGVKPVRGGPPGDLLCKVVLETPVNLSDEQKDLLRQFQDSLDGSNSHHSPKKTSFFDGVKKFFEDMKP.

Positions 5 to 70 constitute a J domain; that stretch reads DYYEVLGIER…EKRSAYDQFG (66 aa). The CR-type zinc-finger motif lies at 137–215; the sequence is GTTVDIRVPR…CHGEGRVRET (79 aa). Zn(2+)-binding residues include cysteine 150, cysteine 153, cysteine 167, cysteine 170, cysteine 189, cysteine 192, cysteine 203, and cysteine 206. CXXCXGXG motif repeat units follow at residues 150–157, 167–174, 189–196, and 203–210; these read CEHCDGDG, CPTCHGQG, CPTCHGAG, and CRKCHGEG.

This sequence belongs to the DnaJ family. As to quaternary structure, homodimer. The cofactor is Zn(2+).

Its subcellular location is the cytoplasm. Participates actively in the response to hyperosmotic and heat shock by preventing the aggregation of stress-denatured proteins and by disaggregating proteins, also in an autonomous, DnaK-independent fashion. Unfolded proteins bind initially to DnaJ; upon interaction with the DnaJ-bound protein, DnaK hydrolyzes its bound ATP, resulting in the formation of a stable complex. GrpE releases ADP from DnaK; ATP binding to DnaK triggers the release of the substrate protein, thus completing the reaction cycle. Several rounds of ATP-dependent interactions between DnaJ, DnaK and GrpE are required for fully efficient folding. Also involved, together with DnaK and GrpE, in the DNA replication of plasmids through activation of initiation proteins. The protein is Chaperone protein DnaJ of Chromohalobacter salexigens (strain ATCC BAA-138 / DSM 3043 / CIP 106854 / NCIMB 13768 / 1H11).